A 1105-amino-acid chain; its full sequence is Carbamoyl phosphate synthase large chain (1105 aa).

Residues 1–402 are carboxyphosphate synthetic domain; it reads MPKRDDIEKV…ALGKAVRSLE (402 aa). Arg129, Arg169, Gly175, Gly176, Lys208, Val210, Glu215, Gly241, Ile242, His243, Gln285, and Glu299 together coordinate ATP. The region spanning 133–328 is the ATP-grasp 1 domain; the sequence is KTAMKNCGLE…IAKISALLAV (196 aa). Mg(2+)-binding residues include Gln285, Glu299, and Asn301. Residues Gln285, Glu299, and Asn301 each contribute to the Mn(2+) site. The interval 403–542 is oligomerization domain; sequence LDIAPKLDLR…STYNGMENET (140 aa). The tract at residues 543 to 945 is carbamoyl phosphate synthetic domain; it reads IPSKRRKIMV…AFAKAQLSAD (403 aa). Residues 667 to 858 enclose the ATP-grasp 2 domain; that stretch reads AKFLKQSGLS…VAKIAAKTII (192 aa). Arg703, Lys742, Leu744, Glu749, Gly774, Ile775, His776, Ser777, Gln817, and Glu829 together coordinate ATP. Residues Gln817, Glu829, and Asn831 each contribute to the Mg(2+) site. Residues Gln817, Glu829, and Asn831 each contribute to the Mn(2+) site. Residues 940–1101 form the MGS-like domain; sequence AQLSADGIST…QDIFYAQQNT (162 aa). Residues 946 to 1105 form an allosteric domain region; that stretch reads GISTKSLLVT…YAQQNTLLKK (160 aa).

It belongs to the CarB family. In terms of assembly, composed of two chains; the small (or glutamine) chain promotes the hydrolysis of glutamine to ammonia, which is used by the large (or ammonia) chain to synthesize carbamoyl phosphate. Tetramer of heterodimers (alpha,beta)4. Mg(2+) serves as cofactor. Requires Mn(2+) as cofactor.

It carries out the reaction hydrogencarbonate + L-glutamine + 2 ATP + H2O = carbamoyl phosphate + L-glutamate + 2 ADP + phosphate + 2 H(+). The catalysed reaction is hydrogencarbonate + NH4(+) + 2 ATP = carbamoyl phosphate + 2 ADP + phosphate + 2 H(+). Its pathway is amino-acid biosynthesis; L-arginine biosynthesis; carbamoyl phosphate from bicarbonate: step 1/1. The protein operates within pyrimidine metabolism; UMP biosynthesis via de novo pathway; (S)-dihydroorotate from bicarbonate: step 1/3. In terms of biological role, large subunit of the glutamine-dependent carbamoyl phosphate synthetase (CPSase). CPSase catalyzes the formation of carbamoyl phosphate from the ammonia moiety of glutamine, carbonate, and phosphate donated by ATP, constituting the first step of 2 biosynthetic pathways, one leading to arginine and/or urea and the other to pyrimidine nucleotides. The large subunit (synthetase) binds the substrates ammonia (free or transferred from glutamine from the small subunit), hydrogencarbonate and ATP and carries out an ATP-coupled ligase reaction, activating hydrogencarbonate by forming carboxy phosphate which reacts with ammonia to form carbamoyl phosphate. This Pseudothermotoga lettingae (strain ATCC BAA-301 / DSM 14385 / NBRC 107922 / TMO) (Thermotoga lettingae) protein is Carbamoyl phosphate synthase large chain.